The sequence spans 156 residues: Small ribosomal subunit protein uS7 (156 aa).

The protein belongs to the universal ribosomal protein uS7 family. As to quaternary structure, part of the 30S ribosomal subunit. Contacts proteins S9 and S11.

Functionally, one of the primary rRNA binding proteins, it binds directly to 16S rRNA where it nucleates assembly of the head domain of the 30S subunit. Is located at the subunit interface close to the decoding center, probably blocks exit of the E-site tRNA. The chain is Small ribosomal subunit protein uS7 from Rhizobium johnstonii (strain DSM 114642 / LMG 32736 / 3841) (Rhizobium leguminosarum bv. viciae).